Reading from the N-terminus, the 2431-residue chain is Nucleoprotein TPR (2431 aa).

Residues 1-48 form a disordered region; that stretch reads MTSGGSASRSGHRGVPMTSRGFDGSRRGSLRRAGARETASEAADGAAP. The interval 77 to 87 is sufficient for interaction with TPR; sequence AVLQQVLERPE. Residues 88–191 are necessary for interaction with HSF1; the sequence is LNKLPKSTQN…GIQSQFTRAK (104 aa). The stretch at 98 to 444 forms a coiled coil; the sequence is KLEKFLAEQQ…SATKRKGAIL (347 aa). N6-acetyllysine is present on residues Lys-326, Lys-386, and Lys-419. Ser-453 carries the phosphoserine modification. The stretch at 486–678 forms a coiled coil; that stretch reads EKQENKRINK…ESRQHQMQLV (193 aa). Lys-502, Lys-531, and Lys-551 each carry N6-acetyllysine. Residues 511 to 587 are necessary for association to the NPC; sequence LKRQREEYER…LMELEEARGN (77 aa). Residues Ser-596, Ser-597, and Ser-706 each carry the phosphoserine modification. A coiled-coil region spans residues 736-1246; that stretch reads STEAIEAKAA…IEKLSDKVVT (511 aa). N6-acetyllysine occurs at positions 787, 797, 822, and 829. Residues 989–998 show a composition bias toward polar residues; that stretch reads LASQSTQRTG. Positions 989–1011 are disordered; that stretch reads LASQSTQRTGKGQPGDRDDVDDL. Positions 1002–1011 are enriched in basic and acidic residues; sequence PGDRDDVDDL. Ser-1259 carries the phosphoserine modification. Coiled-coil stretches lie at residues 1289–1494 and 1547–1700; these read EVAQ…LDAK and VQEM…QRDE. The interval 1292 to 1394 is necessary for interaction with HSF1; that stretch reads QVESLRYRQR…NAELSEKSGM (103 aa). Positions 1689 to 1701 are enriched in basic and acidic residues; it reads EHQERHLEQRDEP. Positions 1689 to 1744 are disordered; it reads EHQERHLEQRDEPQEPTNKAPEQQRQITLKTTPASGERGIASTSDPPTANIKPTPV. Polar residues predominate over residues 1703 to 1722; sequence EPTNKAPEQQRQITLKTTPA. N6-acetyllysine is present on Lys-1760. Thr-1762 is subject to Phosphothreonine. The segment covering 1873 to 1898 has biased composition (polar residues); sequence SSPVERPSTSTAVFGTVSATPSSSLP. Positions 1873 to 2193 are disordered; sequence SSPVERPSTS…TPGIGGMQQH (321 aa). Positions 1882–1937 are sufficient and essential for mediating its nuclear import; sequence STAVFGTVSATPSSSLPKRTREEEEDSTMEAGDQVSEDTVEMPLPKKLKMVTPVGT. Residues 1937–1951 are compositionally biased toward acidic residues; that stretch reads TEEEVMAEESTDGEA. The span at 1954-1963 shows a compositional bias: polar residues; sequence QAYNQDSQDS. Position 1963 is a phosphoserine (Ser-1963). A compositionally biased stretch (low complexity) spans 1994-2005; the sequence is QSDQQTTSSQDG. Composition is skewed to acidic residues over residues 2016–2057 and 2067–2088; these read DSDD…EDSN and DGYEADDAEGGDGTDPGTETEE. Residues 2100 to 2132 are compositionally biased toward polar residues; sequence ADSQNSGEGNTSAAESSFSQEVAREQQPTSASE. A phosphoserine mark is found at Ser-2102, Ser-2105, Ser-2116, Ser-2118, and Ser-2141. Arg-2174 and Arg-2179 each carry omega-N-methylarginine. 2 positions are modified to phosphothreonine: Thr-2184 and Thr-2205. Ser-2223 carries the phosphoserine modification. Arg-2231 bears the Omega-N-methylarginine mark. The segment covering 2295 to 2312 has biased composition (polar residues); the sequence is ESTTSDASEHASQSVPMV. The segment at 2295–2431 is disordered; the sequence is ESTTSDASEH…RGGINRGNIN (137 aa). A compositionally biased stretch (low complexity) spans 2313 to 2325; the sequence is TTSTGTLSTTNET. Residues 2327 to 2340 are compositionally biased toward acidic residues; that stretch reads AGDDGDEVFVEAES. Residues 2341–2351 are compositionally biased toward low complexity; sequence EGISSEAGLEI. The segment covering 2353–2367 has biased composition (acidic residues); it reads SQQEEEPVQASDESD. Positions 2368 to 2388 are enriched in low complexity; the sequence is LPSTSQDPPSSSSVDTSSSQP. Residues Arg-2411, Arg-2413, and Arg-2422 each carry the asymmetric dimethylarginine modification. Positions 2420-2431 are enriched in gly residues; the sequence is GGRGGINRGNIN.

Belongs to the TPR family. As to quaternary structure, homodimer. Part of the nuclear pore complex (NPC). Associates with the XPO1/CRM1-mediated nuclear export complex, the Importin alpha/Importin beta receptor and the dynein 1 complex. Interacts (via C-terminal domain) with the KPNB1; the interaction occurs in a RanGTP-dependent manner. Interacts (via C-terminal region and phosphorylated form) with MAPK1/ERK2 (via phosphorylated form); the interaction requires dimerization of MAPK1/ERK2 and increases following EGF stimulation. Interacts with MAPK3/ERK1; the interaction increases following EGF stimulation. Interacts (via coiled coil region) with NUP153; the interaction is direct. Interacts with HSF1; the interaction increases in a stress-responsive manner and stimulates export of stress-induced HSP70 mRNA. Interacts with huntingtin/HTT; the interaction is inhibited by aggregated huntingtin/HTT forms with expanded polyglutamine stretch. Interacts with MAD1L1 (via N-terminal region), MAD2L1, and TTK; the interactions occurs in a microtubule-independent manner. Interacts (via middle region) with DYNLL1. Interacts with DCTN1, dynein, NUP153 and tubulin. Interacts with MTA1. Interacts with IFI204 (via C-terminal region). Interacts with IFI203. Interacts with ZC3HC1; this interaction mediates ZC3HC1 nuclear envelopes (NE)-association but also required for proper positioning of a substantial amount of TPR at the nuclear basket (NB). Post-translationally, phosphorylated. Phosphorylation occurs on serine and threonine residues (comprised in the C-terminal region) by MAPK1/ERK2 and stabilizes the interaction between these two proteins. In terms of tissue distribution, expressed in the heart, liver, kidney, spleen, lung and skeletal muscles.

The protein resides in the nucleus. It is found in the nucleus membrane. Its subcellular location is the nucleus envelope. It localises to the nuclear pore complex. The protein localises to the cytoplasm. The protein resides in the cytoskeleton. It is found in the spindle. Its subcellular location is the chromosome. It localises to the centromere. The protein localises to the kinetochore. Its function is as follows. Component of the nuclear pore complex (NPC), a complex required for the trafficking across the nuclear envelope. Functions as a scaffolding element in the nuclear phase of the NPC essential for normal nucleocytoplasmic transport of proteins and mRNAs, plays a role in the establishment of nuclear-peripheral chromatin compartmentalization in interphase, and in the mitotic spindle checkpoint signaling during mitosis. Involved in the quality control and retention of unspliced mRNAs in the nucleus; in association with NUP153, regulates the nuclear export of unspliced mRNA species bearing constitutive transport element (CTE) in a NXF1- and KHDRBS1-independent manner. Negatively regulates both the association of CTE-containing mRNA with large polyribosomes and translation initiation. Does not play any role in Rev response element (RRE)-mediated export of unspliced mRNAs. Implicated in nuclear export of mRNAs transcribed from heat shock gene promoters; associates both with chromatin in the HSP70 promoter and with mRNAs transcribed from this promoter under stress-induced conditions. Plays a limited role in the regulation of nuclear protein export. Modulates the nucleocytoplasmic transport of activated MAPK1/ERK2 and huntingtin/HTT and may serve as a docking site for the XPO1/CRM1-mediated nuclear export complex. Also plays a role as a structural and functional element of the perinuclear chromatin distribution; involved in the formation and/or maintenance of NPC-associated perinuclear heterochromatin exclusion zones (HEZs). Finally, acts as a spatial regulator of the spindle-assembly checkpoint (SAC) response ensuring a timely and effective recruitment of spindle checkpoint proteins like MAD1L1 and MAD2L1 to unattached kinetochore during the metaphase-anaphase transition before chromosome congression. Its N-terminus is involved in activation of oncogenic kinases. The sequence is that of Nucleoprotein TPR from Mus musculus (Mouse).